Reading from the N-terminus, the 269-residue chain is Ribosomal RNA small subunit methyltransferase A (269 aa).

S-adenosyl-L-methionine contacts are provided by Ile17, Gly42, Glu64, Asp89, and Asn109.

The protein belongs to the class I-like SAM-binding methyltransferase superfamily. rRNA adenine N(6)-methyltransferase family. RsmA subfamily.

It localises to the cytoplasm. It catalyses the reaction adenosine(1518)/adenosine(1519) in 16S rRNA + 4 S-adenosyl-L-methionine = N(6)-dimethyladenosine(1518)/N(6)-dimethyladenosine(1519) in 16S rRNA + 4 S-adenosyl-L-homocysteine + 4 H(+). Specifically dimethylates two adjacent adenosines (A1518 and A1519) in the loop of a conserved hairpin near the 3'-end of 16S rRNA in the 30S particle. May play a critical role in biogenesis of 30S subunits. In Anaplasma phagocytophilum (strain HZ), this protein is Ribosomal RNA small subunit methyltransferase A.